A 201-amino-acid chain; its full sequence is IDLSRF-like peptide (201 aa).

The signal sequence occupies residues 1–28; it reads MVRRFCNGAVALGIALTACAAFPRAIMA. The propeptide occupies 43–201; it reads SDACHPYEPF…EKLVKTGFLD (159 aa). An LDL-receptor class A domain is found at 45–85; the sequence is ACHPYEPFKCPGDGLCISIQYLCDGAPDCQDGYDEDSRLCT. Intrachain disulfides connect Cys46–Cys60, Cys54–Cys73, and Cys67–Cys84.

Expressed in central brain, antennal and optical lobes, in gnathal, thoracic and abdominal ganglia and in the retrocerebral complex (at protein level).

It localises to the secreted. The chain is IDLSRF-like peptide from Camponotus floridanus (Florida carpenter ant).